Here is a 226-residue protein sequence, read N- to C-terminus: UPF0758 protein M28_Spy0816 (226 aa).

The region spanning serine 103–leucine 225 is the MPN domain. Zn(2+)-binding residues include histidine 174, histidine 176, and aspartate 187. The short motif at histidine 174–aspartate 187 is the JAMM motif element.

The protein belongs to the UPF0758 family.

This is UPF0758 protein M28_Spy0816 from Streptococcus pyogenes serotype M28 (strain MGAS6180).